We begin with the raw amino-acid sequence, 211 residues long: Thymidylate kinase (211 aa).

11–18 (GPDGAGKT) serves as a coordination point for ATP.

Belongs to the thymidylate kinase family.

It carries out the reaction dTMP + ATP = dTDP + ADP. Its function is as follows. Phosphorylation of dTMP to form dTDP in both de novo and salvage pathways of dTTP synthesis. This is Thymidylate kinase from Streptococcus uberis (strain ATCC BAA-854 / 0140J).